Consider the following 507-residue polypeptide: Putative thymidine phosphorylase (507 aa).

It belongs to the thymidine/pyrimidine-nucleoside phosphorylase family. Type 2 subfamily.

It carries out the reaction thymidine + phosphate = 2-deoxy-alpha-D-ribose 1-phosphate + thymine. The polypeptide is Putative thymidine phosphorylase (Ralstonia nicotianae (strain ATCC BAA-1114 / GMI1000) (Ralstonia solanacearum)).